We begin with the raw amino-acid sequence, 198 residues long: UPF0312 protein PFL_5802 (198 aa).

The first 23 residues, 1–23 (MLKKTLAALAIGSAVLAAGQVMA), serve as a signal peptide directing secretion.

This sequence belongs to the UPF0312 family. Type 1 subfamily.

It localises to the periplasm. This is UPF0312 protein PFL_5802 from Pseudomonas fluorescens (strain ATCC BAA-477 / NRRL B-23932 / Pf-5).